Consider the following 350-residue polypeptide: Ion-translocating oxidoreductase complex subunit D (350 aa).

5 helical membrane-spanning segments follow: residues 19–39 (LMLL…WFFG), 41–61 (GTLI…ALVL), 67–87 (PVKP…IGLS), 88–108 (LPPL…IIIA), and 122–142 (PAMV…TSWL). T186 carries the FMN phosphoryl threonine modification. Helical transmembrane passes span 213–233 (WGGI…LFLL), 242–262 (IPGA…LMTP), 264–284 (ATAT…AFFI), and 299–316 (LVYG…RRFG).

It belongs to the NqrB/RnfD family. The complex is composed of six subunits: RnfA, RnfB, RnfC, RnfD, RnfE and RnfG. Requires FMN as cofactor.

It localises to the cell inner membrane. Functionally, part of a membrane-bound complex that couples electron transfer with translocation of ions across the membrane. This Aeromonas hydrophila subsp. hydrophila (strain ATCC 7966 / DSM 30187 / BCRC 13018 / CCUG 14551 / JCM 1027 / KCTC 2358 / NCIMB 9240 / NCTC 8049) protein is Ion-translocating oxidoreductase complex subunit D.